Here is a 262-residue protein sequence, read N- to C-terminus: Indole-3-glycerol phosphate synthase (262 aa).

The protein belongs to the TrpC family.

It catalyses the reaction 1-(2-carboxyphenylamino)-1-deoxy-D-ribulose 5-phosphate + H(+) = (1S,2R)-1-C-(indol-3-yl)glycerol 3-phosphate + CO2 + H2O. Its pathway is amino-acid biosynthesis; L-tryptophan biosynthesis; L-tryptophan from chorismate: step 4/5. This is Indole-3-glycerol phosphate synthase from Clostridium kluyveri (strain NBRC 12016).